The following is a 271-amino-acid chain: NH(3)-dependent NAD(+) synthetase (271 aa).

43–50 is an ATP binding site; the sequence is GISGGQDS. Residue Asp49 coordinates Mg(2+). Position 137 (Arg137) interacts with deamido-NAD(+). Thr157 contacts ATP. Glu162 is a binding site for Mg(2+). 2 residues coordinate deamido-NAD(+): Lys170 and Asp177. Lys186 and Thr208 together coordinate ATP. 257–258 lines the deamido-NAD(+) pocket; sequence HK.

Belongs to the NAD synthetase family. In terms of assembly, homodimer.

The catalysed reaction is deamido-NAD(+) + NH4(+) + ATP = AMP + diphosphate + NAD(+) + H(+). Its pathway is cofactor biosynthesis; NAD(+) biosynthesis; NAD(+) from deamido-NAD(+) (ammonia route): step 1/1. Functionally, catalyzes the ATP-dependent amidation of deamido-NAD to form NAD. Uses ammonia as a nitrogen source. This Exiguobacterium sp. (strain ATCC BAA-1283 / AT1b) protein is NH(3)-dependent NAD(+) synthetase.